Here is a 106-residue protein sequence, read N- to C-terminus: uncharacterized protein (106 aa).

This is an uncharacterized protein from Rickettsia prowazekii (strain Madrid E).